The chain runs to 202 residues: Prostamide/prostaglandin F synthase (202 aa).

Position 108 is a phosphotyrosine (Tyr108).

The protein belongs to the peroxiredoxin-like PRXL2 family. Prostamide/prostaglandin F synthase subfamily.

It is found in the cytoplasm. The protein resides in the cytosol. It carries out the reaction prostaglandin H2 + [thioredoxin]-dithiol = prostaglandin F2alpha + [thioredoxin]-disulfide. The enzyme catalyses prostamide F2alpha + [thioredoxin]-disulfide = prostamide H2 + [thioredoxin]-dithiol. Its function is as follows. Catalyzes the reduction of prostaglandin-ethanolamide H(2) (prostamide H(2)) to prostamide F(2alpha) with NADPH as proton donor. Also able to reduce prostaglandin H(2) to prostaglandin F(2alpha). In Sus scrofa (Pig), this protein is Prostamide/prostaglandin F synthase (PRXL2B).